Consider the following 617-residue polypeptide: Tetratricopeptide repeat protein 39B (617 aa).

3 TPR repeats span residues 328–361 (SLILFYHARIELLKGNTEKAQETFRKCISVQEEW), 520–553 (CLVKLLKGCCLKNLERPLQAELCFNHVVESEKLL), and 561–594 (PFTLFELAFLYKSQGEIDKAIKVLETARNNYKDY).

The protein belongs to the TTC39 family. High expression in lung and spleen. Low lower expression in liver and small intestine. Weak expression in heart, brain, kidney, adipose, and adrenal gland.

Its function is as follows. Regulates high density lipoprotein (HDL) cholesterol metabolism by promoting the ubiquitination and degradation of the oxysterols receptors LXR (NR1H2 and NR1H3). The chain is Tetratricopeptide repeat protein 39B from Mus musculus (Mouse).